The chain runs to 145 residues: Antiholin-like protein LrgA (145 aa).

4 helical membrane-spanning segments follow: residues 13–30 (FFHQ…SKII), 40–62 (GSVI…LGEV), 69–91 (LTNN…LGVI), and 95–117 (PFLI…GYVT).

This sequence belongs to the CidA/LrgA family. LrgA subfamily.

It is found in the cell membrane. Inhibits the expression or activity of extracellular murein hydrolases by interacting, possibly with LrgB, with the holin-like proteins CidA and/or CidB. The LrgAB and CidAB proteins may affect the proton motive force of the membrane. May be involved in programmed cell death (PCD), possibly triggering PCD in response to antibiotics and environmental stresses. In Staphylococcus aureus (strain MW2), this protein is Antiholin-like protein LrgA.